The following is a 910-amino-acid chain: DNA repair and recombination protein RAD54B (910 aa).

Residues 1 to 14 show a composition bias toward polar residues; that stretch reads MRRSAAPSQLQGNS. Residues 1 to 33 are disordered; it reads MRRSAAPSQLQGNSFKKPKFIPPGRSNPGLNEE. Serine 14 is subject to Phosphoserine. Positions 313-480 constitute a Helicase ATP-binding domain; it reads GMRMNGRCGA…FALIDFVNPG (168 aa). ATP is bound at residue 326 to 333; sequence DEMGLGKT. The short motif at 431–434 is the DEGH box element; it reads DEGH. Residues 649–810 form the Helicase C-terminal domain; that stretch reads KLLAVIHELR…HIQFSVEELK (162 aa).

This sequence belongs to the SNF2/RAD54 helicase family. Interacts with RAD51 through the NH2-terminal domain. Immunoprecipitation experiments show that the interaction is constitutive and not induced by ionizing radiation. The interaction may be indirect. In terms of tissue distribution, abundantly expressed in testis and spleen. Relatively low levels observed in thymus, prostate, ovary and colon.

The protein localises to the nucleus. Involved in DNA repair and mitotic recombination. May play an active role in recombination processes in concert with other members of the RAD52 epistasis group. The polypeptide is DNA repair and recombination protein RAD54B (RAD54B) (Homo sapiens (Human)).